A 129-amino-acid polypeptide reads, in one-letter code: Gem-associated protein 7 (129 aa).

N-acetylmethionine is present on Met-1. One can recognise an SUZ-C domain in the interval 1-31 (MQSPLTIPVPVPVLRLPRGPDGFSRGFASDG). Residues 63 to 129 (RYLRSLLAMV…SDIISYSFKL (67 aa)) enclose the Sm domain.

The protein belongs to the gemin-7 family. As to quaternary structure, part of the core SMN complex that contains SMN1, GEMIN2/SIP1, DDX20/GEMIN3, GEMIN4, GEMIN5, GEMIN6, GEMIN7, GEMIN8 and STRAP/UNRIP. Part of the SMN-Sm complex that contains SMN1, GEMIN2/SIP1, DDX20/GEMIN3, GEMIN4, GEMIN5, GEMIN6, GEMIN7, GEMIN8, STRAP/UNRIP and the Sm proteins SNRPB, SNRPD1, SNRPD2, SNRPD3, SNRPE, SNRPF and SNRPG. Interacts with GEMIN6; the interaction is direct. Interacts with STRAP/UNRIP; the interaction is direct. Interacts with GEMIN8; the interaction is direct. Interacts with SNRPB, SNRPD2, SNRPD3 and SNRPE; the interaction is direct.

The protein resides in the nucleus. It localises to the nucleoplasm. It is found in the gem. Its subcellular location is the cytoplasm. Functionally, the SMN complex catalyzes the assembly of small nuclear ribonucleoproteins (snRNPs), the building blocks of the spliceosome, and thereby plays an important role in the splicing of cellular pre-mRNAs. Most spliceosomal snRNPs contain a common set of Sm proteins SNRPB, SNRPD1, SNRPD2, SNRPD3, SNRPE, SNRPF and SNRPG that assemble in a heptameric protein ring on the Sm site of the small nuclear RNA to form the core snRNP (Sm core). In the cytosol, the Sm proteins SNRPD1, SNRPD2, SNRPE, SNRPF and SNRPG are trapped in an inactive 6S pICln-Sm complex by the chaperone CLNS1A that controls the assembly of the core snRNP. To assemble core snRNPs, the SMN complex accepts the trapped 5Sm proteins from CLNS1A forming an intermediate. Binding of snRNA inside 5Sm triggers eviction of the SMN complex, thereby allowing binding of SNRPD3 and SNRPB to complete assembly of the core snRNP. In Mus musculus (Mouse), this protein is Gem-associated protein 7 (Gemin7).